A 487-amino-acid polypeptide reads, in one-letter code: Uronate isomerase (487 aa).

It belongs to the metallo-dependent hydrolases superfamily. Uronate isomerase family.

It catalyses the reaction D-glucuronate = D-fructuronate. It carries out the reaction aldehydo-D-galacturonate = keto-D-tagaturonate. It functions in the pathway carbohydrate metabolism; pentose and glucuronate interconversion. This is Uronate isomerase from Caulobacter vibrioides (strain ATCC 19089 / CIP 103742 / CB 15) (Caulobacter crescentus).